The primary structure comprises 553 residues: Glucose-6-phosphate isomerase (553 aa).

D-glucose 6-phosphate-binding positions include 164–165 (GS), 215–220 (SKTFTT), Q359, E363, H394, and K516. Residue E363 is the Proton donor of the active site. Residues H394 and K516 contribute to the active site.

Belongs to the GPI family. As to quaternary structure, homodimer.

Its subcellular location is the cytoplasm. It is found in the cytosol. The enzyme catalyses alpha-D-glucose 6-phosphate = beta-D-fructose 6-phosphate. It functions in the pathway carbohydrate degradation; glycolysis; D-glyceraldehyde 3-phosphate and glycerone phosphate from D-glucose: step 2/4. In the cytoplasm, catalyzes the conversion of glucose-6-phosphate to fructose-6-phosphate, the second step in glycolysis, and the reverse reaction during gluconeogenesis. In Aspergillus oryzae (strain ATCC 42149 / RIB 40) (Yellow koji mold), this protein is Glucose-6-phosphate isomerase (pgiA).